Reading from the N-terminus, the 93-residue chain is MANKKIDHREEAIELLKQDAKRILQLIKVQMDNLTLPQCPAYEEVLDTQMYGLSREINFATRLGLIEPEEGKKLISTLEKELSALHELSMSKK.

Belongs to the UPF0358 family.

The chain is UPF0358 protein lin1058 from Listeria innocua serovar 6a (strain ATCC BAA-680 / CLIP 11262).